A 243-amino-acid polypeptide reads, in one-letter code: Polycomb group RING finger protein 1 (243 aa).

Lysine 12 participates in a covalent cross-link: Glycyl lysine isopeptide (Lys-Gly) (interchain with G-Cter in SUMO2). The RING-type zinc-finger motif lies at 35-74 (CCLCAGYFVDATTITECLHTFCKSCIVKYLQTSKYCPMCN). Residues 74-231 (NIKIHETQPL…LSRWFGKPSP (158 aa)) are necessary for repressor activity. Lysine 76 participates in a covalent cross-link: Glycyl lysine isopeptide (Lys-Gly) (interchain with G-Cter in SUMO2). Residues 138-239 (LPFTSFDHYY…SPLLLQYSVK (102 aa)) form a required for the interaction with the KDM2B-SKP1 heterodimeric complex region. Positions 151–239 (EQLSLCLERL…SPLLLQYSVK (89 aa)) are RING-finger and WD40-associated ubiquitin-like domain (RAWUL); sufficient for interaction with BCOR and BCORL1.

Interacts with BCORL1, forming heterodimers. The PCGF1-BCORL1 heterodimeric complex interacts with the KDM2B-SKP1 heterodimeric complex to form a homotetrameric polycomb repression complex 1 (PRC1.1). Component of the repressive BCOR complex containing a Polycomb group subcomplex at least composed of RYBP, RING1 and RNF2/RING2. Specifically interacts with BCOR, RING1 and RNF2/RING2. Component of a PRC1-like complex. Interacts with CBX6, CBX7 and CBX8. Interacts with DPPA4, NANOG, POU5F1 and RYBP. In terms of tissue distribution, highly expressed in brain, cerebellum, heart and testis.

The protein resides in the nucleus. Its function is as follows. Component of the Polycomb group (PcG) multiprotein BCOR complex, a complex required to maintain the transcriptionally repressive state of some genes, such as BCL6 and the cyclin-dependent kinase inhibitor, CDKN1A. Transcriptional repressor that may be targeted to the DNA by BCL6; this transcription repressor activity may be related to PKC signaling pathway. Represses CDKN1A expression by binding to its promoter, and this repression is dependent on the retinoic acid response element (RARE element). Promotes cell cycle progression and enhances cell proliferation as well. May have a positive role in tumor cell growth by down-regulating CDKN1A. Component of a Polycomb group (PcG) multiprotein PRC1-like complex, a complex class required to maintain the transcriptionally repressive state of many genes, including Hox genes, throughout development. PcG PRC1 complex acts via chromatin remodeling and modification of histones; it mediates monoubiquitination of histone H2A 'Lys-119', rendering chromatin heritably changed in its expressibility. Within the PRC1-like complex, regulates RNF2 ubiquitin ligase activity. Regulates the expression of DPPA4 and NANOG in the NT2 embryonic carcinoma cells. This Rattus norvegicus (Rat) protein is Polycomb group RING finger protein 1 (Pcgf1).